The following is a 174-amino-acid chain: ATP synthase subunit delta (174 aa).

The protein belongs to the ATPase delta chain family. In terms of assembly, F-type ATPases have 2 components, F(1) - the catalytic core - and F(0) - the membrane proton channel. F(1) has five subunits: alpha(3), beta(3), gamma(1), delta(1), epsilon(1). F(0) has three main subunits: a(1), b(2) and c(10-14). The alpha and beta chains form an alternating ring which encloses part of the gamma chain. F(1) is attached to F(0) by a central stalk formed by the gamma and epsilon chains, while a peripheral stalk is formed by the delta and b chains.

Its subcellular location is the cell inner membrane. F(1)F(0) ATP synthase produces ATP from ADP in the presence of a proton or sodium gradient. F-type ATPases consist of two structural domains, F(1) containing the extramembraneous catalytic core and F(0) containing the membrane proton channel, linked together by a central stalk and a peripheral stalk. During catalysis, ATP synthesis in the catalytic domain of F(1) is coupled via a rotary mechanism of the central stalk subunits to proton translocation. Functionally, this protein is part of the stalk that links CF(0) to CF(1). It either transmits conformational changes from CF(0) to CF(1) or is implicated in proton conduction. The sequence is that of ATP synthase subunit delta from Francisella tularensis subsp. mediasiatica (strain FSC147).